The primary structure comprises 293 residues: Tumor necrosis factor receptor type 1-associated DEATH domain protein (293 aa).

A Nuclear export signal motif is present at residues 156 to 171 (LRDDEVTQLEQQLQNS). One can recognise a Death domain in the interval 200-290 (TPADQQRFAA…SMAEIMLGIQ (91 aa)). The short motif at 216-229 (KRVGRALQKNCRAL) is the Nuclear localization signal element.

As to quaternary structure, heterodimer with tnfrsf1a.

It localises to the nucleus. It is found in the cytoplasm. The protein localises to the cytoskeleton. Functionally, adapter molecule for tnfrsf1a that specifically associates with the cytoplasmic domain of activated tnfrsf1a mediating its interaction with fadd. The polypeptide is Tumor necrosis factor receptor type 1-associated DEATH domain protein (Danio rerio (Zebrafish)).